A 124-amino-acid chain; its full sequence is Small ribosomal subunit protein bS6 (124 aa).

The protein belongs to the bacterial ribosomal protein bS6 family.

Binds together with bS18 to 16S ribosomal RNA. The protein is Small ribosomal subunit protein bS6 of Bordetella avium (strain 197N).